A 34-amino-acid polypeptide reads, in one-letter code: Photosystem II reaction center protein T (34 aa).

Residues 3–23 form a helical membrane-spanning segment; the sequence is ALVYTFLLVSTLGIIFFAIFF.

Belongs to the PsbT family. As to quaternary structure, PSII is composed of 1 copy each of membrane proteins PsbA, PsbB, PsbC, PsbD, PsbE, PsbF, PsbH, PsbI, PsbJ, PsbK, PsbL, PsbM, PsbT, PsbY, PsbZ, Psb30/Ycf12, at least 3 peripheral proteins of the oxygen-evolving complex and a large number of cofactors. It forms dimeric complexes.

It is found in the plastid. It localises to the chloroplast thylakoid membrane. Functionally, found at the monomer-monomer interface of the photosystem II (PS II) dimer, plays a role in assembly and dimerization of PSII. PSII is a light-driven water plastoquinone oxidoreductase, using light energy to abstract electrons from H(2)O, generating a proton gradient subsequently used for ATP formation. The chain is Photosystem II reaction center protein T from Atropa belladonna (Belladonna).